Consider the following 602-residue polypeptide: Cholinesterase (602 aa).

The first 28 residues, 1–28 (MQSKGTIISIQFLLRFLLLWVLIGKSHT), serve as a signal peptide directing secretion. N-linked (GlcNAc...) asparagine glycosylation occurs at Asn85. Cys93 and Cys120 are oxidised to a cystine. Residue Asn134 is glycosylated (N-linked (GlcNAc...) asparagine). 144-145 (GG) provides a ligand contact to substrate. Catalysis depends on Ser226, which acts as the Acyl-ester intermediate. A Phosphoserine modification is found at Ser226. Residues Asn269 and Asn284 are each glycosylated (N-linked (GlcNAc...) asparagine). An intrachain disulfide couples Cys280 to Cys291. The active-site Charge relay system is the Glu353. The N-linked (GlcNAc...) asparagine glycan is linked to Asn369. Cys428 and Cys547 are oxidised to a cystine. The active-site Charge relay system is the His466. Residues Asn483, Asn509, Asn513, and Asn514 are each glycosylated (N-linked (GlcNAc...) asparagine).

The protein belongs to the type-B carboxylesterase/lipase family. Homotetramer; disulfide-linked. Dimer of dimers.

The protein resides in the secreted. The catalysed reaction is an acylcholine + H2O = a carboxylate + choline + H(+). In terms of biological role, esterase with broad substrate specificity. Contributes to the inactivation of the neurotransmitter acetylcholine. Can degrade neurotoxic organophosphate esters. The protein is Cholinesterase (BCHE) of Felis catus (Cat).